Here is a 562-residue protein sequence, read N- to C-terminus: Putative transport protein ETA_21820 (562 aa).

The next 5 membrane-spanning stretches (helical) occupy residues 8-28 (LLIGNHILLLFVVLALGLCLG), 32-52 (LGSVQLGNSIGVLVVSLLLGQ), 66-86 (FMLFIFCVGVEAGPNFFSIFF), 94-114 (MLAIVMVSSAMVLALGLGKLF), and 158-178 (HLSLGYALTYLVGLVSLIFGA). 2 consecutive RCK C-terminal domains span residues 202–288 (LDPD…SFRN) and 290–373 (KEVF…RIGF). 6 consecutive transmembrane segments (helical) span residues 383–403 (LLAFCAFFILGLMIGMITFQF), 406–426 (FNFGIGNAAGLLFAGIMLGFL), 440–460 (ALTMVKEFGLMVFMAGVGLSA), 473–493 (LLMLGAGLIVSLVPVVICFLF), 503–523 (ALLFGAIMGARTCAPAMEIIS), and 540–560 (AIANVLLTLAGTLIVIIWPIL).

It belongs to the AAE transporter (TC 2.A.81) family. YbjL subfamily.

The protein localises to the cell membrane. The chain is Putative transport protein ETA_21820 from Erwinia tasmaniensis (strain DSM 17950 / CFBP 7177 / CIP 109463 / NCPPB 4357 / Et1/99).